A 1485-amino-acid polypeptide reads, in one-letter code: Putative E3 ubiquitin-protein ligase LIN-1 (1485 aa).

Residues 337–353 (EENEDDSDSELENESVD) are compositionally biased toward acidic residues. Disordered stretches follow at residues 337 to 363 (EENEDDSDSELENESVDSDDKNNIFSP) and 384 to 417 (NQIPSPDIFSPLDSPRTAPNNSSPNPDMHSKRDS). The 76-residue stretch at 510–585 (KPPKDFVCPI…TSWKEQNPEL (76 aa)) folds into the U-box domain. WD repeat units lie at residues 1204-1241 (SSNGEVLSMVYLNGQVLSGHTDGTIKVWDARKRIPRVI), 1246-1283 (EHTKAVTSLCSSGDRLYSGSLDKTIRVWTIKSDGIKCI), 1409-1448 (SLSTGLDIHRIAINSDFIFAGTKFGTIEVWLKDKFTRVAS), and 1454-1485 (GHTKITSLVSDVDGMMLFVGSSDGKIQVWALD).

As to expression, expressed in roots and nodules, and at very low levels in calli and seedling shoots.

It catalyses the reaction S-ubiquitinyl-[E2 ubiquitin-conjugating enzyme]-L-cysteine + [acceptor protein]-L-lysine = [E2 ubiquitin-conjugating enzyme]-L-cysteine + N(6)-ubiquitinyl-[acceptor protein]-L-lysine.. Its pathway is protein modification; protein ubiquitination. In terms of biological role, putative E3 ubiquitin-protein ligase involved in the rhizobial infection process. Plays an important role in the early steps of infection thread formation and in growth and differentiation of nodules. This is Putative E3 ubiquitin-protein ligase LIN-1 from Lotus japonicus (Lotus corniculatus var. japonicus).